A 271-amino-acid polypeptide reads, in one-letter code: Mannosyl-3-phosphoglycerate phosphatase (271 aa).

Asp13 (nucleophile) is an active-site residue. Residues Asp13, Asp15, and Asp214 each contribute to the Mg(2+) site.

This sequence belongs to the HAD-like hydrolase superfamily. MPGP family. Mg(2+) is required as a cofactor.

It is found in the cytoplasm. It catalyses the reaction 2-O-(alpha-D-mannosyl)-3-phosphoglycerate + H2O = (2R)-2-O-(alpha-D-mannosyl)-glycerate + phosphate. The sequence is that of Mannosyl-3-phosphoglycerate phosphatase from Escherichia coli (strain K12 / DH10B).